A 361-amino-acid polypeptide reads, in one-letter code: Holliday junction branch migration complex subunit RuvB (361 aa).

Polar residues-rich tracts occupy residues Met-1–Val-15 and Glu-28–Ala-40. The disordered stretch occupies residues Met-1–Ser-41. Positions Pro-13–Tyr-203 are large ATPase domain (RuvB-L). ATP-binding positions include Leu-42, Arg-43, Gly-84, Lys-87, Thr-88, Thr-89, Glu-150–Phe-152, Arg-193, Tyr-203, and Arg-240. Thr-88 is a Mg(2+) binding site. Residues Glu-204–Gln-274 are small ATPAse domain (RuvB-S). A head domain (RuvB-H) region spans residues Lys-277–Ser-361. The DNA site is built by Arg-332 and Arg-337.

It belongs to the RuvB family. In terms of assembly, homohexamer. Forms an RuvA(8)-RuvB(12)-Holliday junction (HJ) complex. HJ DNA is sandwiched between 2 RuvA tetramers; dsDNA enters through RuvA and exits via RuvB. An RuvB hexamer assembles on each DNA strand where it exits the tetramer. Each RuvB hexamer is contacted by two RuvA subunits (via domain III) on 2 adjacent RuvB subunits; this complex drives branch migration. In the full resolvosome a probable DNA-RuvA(4)-RuvB(12)-RuvC(2) complex forms which resolves the HJ.

The protein resides in the cytoplasm. It carries out the reaction ATP + H2O = ADP + phosphate + H(+). The RuvA-RuvB-RuvC complex processes Holliday junction (HJ) DNA during genetic recombination and DNA repair, while the RuvA-RuvB complex plays an important role in the rescue of blocked DNA replication forks via replication fork reversal (RFR). RuvA specifically binds to HJ cruciform DNA, conferring on it an open structure. The RuvB hexamer acts as an ATP-dependent pump, pulling dsDNA into and through the RuvAB complex. RuvB forms 2 homohexamers on either side of HJ DNA bound by 1 or 2 RuvA tetramers; 4 subunits per hexamer contact DNA at a time. Coordinated motions by a converter formed by DNA-disengaged RuvB subunits stimulates ATP hydrolysis and nucleotide exchange. Immobilization of the converter enables RuvB to convert the ATP-contained energy into a lever motion, pulling 2 nucleotides of DNA out of the RuvA tetramer per ATP hydrolyzed, thus driving DNA branch migration. The RuvB motors rotate together with the DNA substrate, which together with the progressing nucleotide cycle form the mechanistic basis for DNA recombination by continuous HJ branch migration. Branch migration allows RuvC to scan DNA until it finds its consensus sequence, where it cleaves and resolves cruciform DNA. In terms of biological role, participates in UV-tolerance of Synechocystis PCC 6803. This Synechocystis sp. (strain ATCC 27184 / PCC 6803 / Kazusa) protein is Holliday junction branch migration complex subunit RuvB.